The primary structure comprises 561 residues: Laccase-1 (561 aa).

Positions 1-20 (MKNSFFSSLAKFASLSLAFA) are cleaved as a signal peptide. Plastocyanin-like domains follow at residues 68 to 185 (VVQN…GPAT) and 191 to 337 (DLGM…YTGS). Residues asparagine 71, asparagine 87, and asparagine 114 are each glycosylated (N-linked (GlcNAc...) asparagine). Positions 119, 121, 163, and 165 each coordinate Cu cation. Cysteine 140 and cysteine 542 are oxidised to a cystine. N-linked (GlcNAc...) asparagine glycosylation is found at asparagine 226, asparagine 284, asparagine 327, asparagine 391, and asparagine 398. A Plastocyanin-like 3 domain is found at 396–525 (LLNWTDPTLL…ALQFVESESS (130 aa)). 7 residues coordinate Cu cation: histidine 445, histidine 448, histidine 450, histidine 504, cysteine 505, histidine 506, and histidine 510.

The protein belongs to the multicopper oxidase family. It depends on Cu cation as a cofactor.

The protein localises to the secreted. It catalyses the reaction 4 hydroquinone + O2 = 4 benzosemiquinone + 2 H2O. Lignin degradation and detoxification of lignin-derived products. The chain is Laccase-1 (lcc1) from Botryotinia fuckeliana (Noble rot fungus).